Reading from the N-terminus, the 1107-residue chain is Unconventional myosin-Ie (1107 aa).

Residues 19 to 692 (SGVDDMVLLS…SLFLLEEMRE (674 aa)) form the Myosin motor domain. 112 to 119 (GESGAGKT) provides a ligand contact to ATP. Residues 581–591 (PHYIRCIKPNE) form an actin-binding region. The 30-residue stretch at 695–724 (YDGYARVIQKTWRKFVARKKYVQMREEASD) folds into the IQ domain. The region spanning 730–922 (KERRRNSINR…NKVLQVSIGP (193 aa)) is the TH1 domain. Residues 919–1052 (SIGPGLPKNS…KPQPKPKPQV (134 aa)) are disordered. Composition is skewed to polar residues over residues 979-989 (NQRSNQKSLYT) and 998-1012 (RQQS…QTPE). The residue at position 1001 (serine 1001) is a Phosphoserine. Residues 1034–1051 (RPPPAGGRPKPQPKPKPQ) are compositionally biased toward pro residues. The SH3 domain maps to 1050-1107 (PQVPQCKALYAYDAQDTDELSFNANDIIDIIKEDPSGWWTGRLRGKQGLFPNNYVTKI).

It belongs to the TRAFAC class myosin-kinesin ATPase superfamily. Myosin family. As to quaternary structure, interacts with CALM and F-actin. Interacts (via SH3 domain) with SYNJ1, DNM1 and DNM2. Interacts with ARL14EP. Interacts with CARMIL1. As to expression, detected in kidney glomeruli (at protein level). Detected in utricle.

The protein localises to the cytoplasm. It is found in the cell junction. It localises to the cytoplasmic vesicle. The protein resides in the clathrin-coated vesicle. Its subcellular location is the cytoskeleton. Myosins are actin-based motor molecules with ATPase activity. Unconventional myosins serve in intracellular movements. Their highly divergent tails bind to membranous compartments, which are then moved relative to actin filaments. Binds to membranes containing anionic phospholipids via its tail domain. Involved in clathrin-mediated endocytosis and intracellular movement of clathrin-coated vesicles. Required for normal morphology of the glomerular basement membrane, normal development of foot processes by kidney podocytes and normal kidney function. In dendritic cells, may control the movement of class II-containing cytoplasmic vesicles along the actin cytoskeleton by connecting them with the actin network via ARL14EP and ARL14. In Mus musculus (Mouse), this protein is Unconventional myosin-Ie (Myo1e).